The following is a 106-amino-acid chain: Thioredoxin (106 aa).

Lys-3 is subject to N6-acetyllysine. One can recognise a Thioredoxin domain in the interval 3 to 106 (KQIESKTAFQ…KLEATINELV (104 aa)). Residue Lys-8 is modified to N6-succinyllysine. Active-site nucleophile residues include Cys-32 and Cys-35. A disulfide bridge connects residues Cys-32 and Cys-35. An N6-acetyllysine modification is found at Lys-39. Cys-62 and Cys-69 each carry S-nitrosocysteine. Cys-73 carries the post-translational modification S-nitrosocysteine; alternate. Lys-95 is subject to N6-acetyllysine; alternate. An N6-succinyllysine; alternate modification is found at Lys-95.

It belongs to the thioredoxin family. Homodimer; disulfide-linked. Interacts with TXNIP through the redox-active site. Interacts with MAP3K5 and CASP3. Interacts with APEX1; the interaction stimulates the FOS/JUN AP-1 DNA-binding activity in a redox-dependent manner. In terms of processing, in the fully reduced protein, both Cys-69 and Cys-73 are nitrosylated in response to nitric oxide (NO). When two disulfide bonds are present in the protein, only Cys-73 is nitrosylated. Cys-73 can serve as donor for nitrosylation of target proteins.

Its subcellular location is the nucleus. It localises to the cytoplasm. It is found in the secreted. Functionally, participates in various redox reactions through the reversible oxidation of its active center dithiol to a disulfide and catalyzes dithiol-disulfide exchange reactions. Plays a role in the reversible S-nitrosylation of cysteine residues in target proteins, and thereby contributes to the response to intracellular nitric oxide. Nitrosylates the active site Cys of CASP3 in response to nitric oxide (NO), and thereby inhibits caspase-3 activity. Induces the FOS/JUN AP-1 DNA binding activity in ionizing radiation (IR) cells through its oxidation/reduction status and stimulates AP-1 transcriptional activity. This is Thioredoxin (TXN) from Pongo abelii (Sumatran orangutan).